Here is a 291-residue protein sequence, read N- to C-terminus: 2-C-methyl-D-erythritol 4-phosphate cytidylyltransferase (291 aa).

The tract at residues 1–23 is disordered; sequence MTERDFDTPVETPTVQPAPAQGA.

Belongs to the IspD/TarI cytidylyltransferase family. IspD subfamily.

It catalyses the reaction 2-C-methyl-D-erythritol 4-phosphate + CTP + H(+) = 4-CDP-2-C-methyl-D-erythritol + diphosphate. Its pathway is isoprenoid biosynthesis; isopentenyl diphosphate biosynthesis via DXP pathway; isopentenyl diphosphate from 1-deoxy-D-xylulose 5-phosphate: step 2/6. Its function is as follows. Catalyzes the formation of 4-diphosphocytidyl-2-C-methyl-D-erythritol from CTP and 2-C-methyl-D-erythritol 4-phosphate (MEP). The sequence is that of 2-C-methyl-D-erythritol 4-phosphate cytidylyltransferase from Bifidobacterium longum (strain NCC 2705).